The following is a 117-amino-acid chain: Ig heavy chain V region UPC10 (117 aa).

One can recognise an Ig-like domain in the interval 1–116 (EVKLLESGGG…WGQVTTLTVS (116 aa)).

The polypeptide is Ig heavy chain V region UPC10 (Mus musculus (Mouse)).